The sequence spans 510 residues: ATP synthase subunit alpha (510 aa).

169-176 lines the ATP pocket; that stretch reads GDRQTGKT.

The protein belongs to the ATPase alpha/beta chains family. F-type ATPases have 2 components, CF(1) - the catalytic core - and CF(0) - the membrane proton channel. CF(1) has five subunits: alpha(3), beta(3), gamma(1), delta(1), epsilon(1). CF(0) has three main subunits: a(1), b(2) and c(9-12). The alpha and beta chains form an alternating ring which encloses part of the gamma chain. CF(1) is attached to CF(0) by a central stalk formed by the gamma and epsilon chains, while a peripheral stalk is formed by the delta and b chains.

It is found in the cell inner membrane. It carries out the reaction ATP + H2O + 4 H(+)(in) = ADP + phosphate + 5 H(+)(out). Functionally, produces ATP from ADP in the presence of a proton gradient across the membrane. The alpha chain is a regulatory subunit. This chain is ATP synthase subunit alpha, found in Rickettsia rickettsii (strain Iowa).